The sequence spans 242 residues: MAAASGHGLELANGGDATQDKLHPRNLIPELCRLFYGLGWVTGTGGGISLKHGNEIYIAPSGVQKERIQPEDMFVCDMNEQDISGPPAHKKLKKSQCTPLFMNAYTMRGAGAVIHTHSKAAVMATLLYPGNEFTITHQEMIKGIQKCSSGGYYRYDDTLVVPIIENTPEEKDLKERMAKAMEEYPDSCAVLVRRHGVYVWGETWEKAKTMCECYDYLFDIAVQMKQHGLDPSKHPAGENGIL.

The interval Met1–Leu22 is disordered. Substrate is bound at residue Cys97. Residues His115 and His117 each contribute to the Zn(2+) site. Glu139 functions as the Proton donor/acceptor in the catalytic mechanism. Residue His195 coordinates Zn(2+).

It belongs to the aldolase class II family. MtnB subfamily. Requires Zn(2+) as cofactor.

It localises to the cytoplasm. It catalyses the reaction 5-(methylsulfanyl)-D-ribulose 1-phosphate = 5-methylsulfanyl-2,3-dioxopentyl phosphate + H2O. It functions in the pathway amino-acid biosynthesis; L-methionine biosynthesis via salvage pathway; L-methionine from S-methyl-5-thio-alpha-D-ribose 1-phosphate: step 2/6. Functionally, catalyzes the dehydration of methylthioribulose-1-phosphate (MTRu-1-P) into 2,3-diketo-5-methylthiopentyl-1-phosphate (DK-MTP-1-P). Functions in the methionine salvage pathway. May play a role in apoptosis. The sequence is that of Methylthioribulose-1-phosphate dehydratase from Gallus gallus (Chicken).